The following is a 316-amino-acid chain: GPI-specific phospholipase A2-like PGAP3 (316 aa).

A signal peptide spans 1-18 (MAPFLVLFLAGVVAASRG). At 19 to 93 (DREPVYRDCV…QFHGKWPFSR (75 aa)) the chain is on the lumenal side. A glycan (N-linked (GlcNAc...) asparagine) is linked at N35. Residues 94–114 (FLFFQEPASALASFLNGVASL) form a helical membrane-spanning segment. Topologically, residues 115–132 (LMLLRYRSSVPSSCQMYR) are cytoplasmic. A helical transmembrane segment spans residues 133–153 (TCLAFSMVSVNAWFWSTIFHT). The Lumenal portion of the chain corresponds to 154 to 163 (RDTALTEKMD). Residues 164–180 (YFCASSVILHSIYLCCM) form a helical membrane-spanning segment. The Cytoplasmic portion of the chain corresponds to 181-182 (RT). The chain crosses the membrane as a helical span at residues 183–203 (FGLQYPSIANGFGAFLVLLFA). Residues 204–218 (CHVSYLTLGRFDYSY) lie on the Lumenal side of the membrane. A helical membrane pass occupies residues 219-239 (NMAANTGFGVLNLMWWLAWCF). Over 240 to 251 (RRRFHQPYLWKC) the chain is Cytoplasmic. Residues 252-272 (VLVVISLQSLALLELLDFPPV) form a helical membrane-spanning segment. Residue M273 is a topological domain, lumenal. Residues 274–293 (WILDAHALWHFSTVPLHFLF) traverse the membrane as a helical segment. The Cytoplasmic segment spans residues 294–316 (YSFLKDDSLYLLKINHDDIPKLD).

Belongs to the PGAP3 family.

The protein localises to the golgi apparatus membrane. Its function is as follows. Involved in the fatty acid remodeling steps of GPI-anchor maturation where the unsaturated acyl chain at sn-2 of inositol phosphate is replaced by a saturated stearoyl chain. May catalyze the first step of the fatty acid remodeling, by removing the unsaturated acyl chain at sn-2 of inositol phosphate, generating a lyso-GPI intermediate. The fatty acid remodeling steps is critical for the integration of GPI-APs into lipid rafts. This is GPI-specific phospholipase A2-like PGAP3 from Xenopus tropicalis (Western clawed frog).